The sequence spans 264 residues: Glutamate racemase (264 aa).

Substrate is bound by residues 10–11 (DS) and 42–43 (YG). Catalysis depends on C73, which acts as the Proton donor/acceptor. A substrate-binding site is contributed by 74–75 (NT). C183 functions as the Proton donor/acceptor in the catalytic mechanism. Residue 184 to 185 (TH) coordinates substrate.

Belongs to the aspartate/glutamate racemases family.

The catalysed reaction is L-glutamate = D-glutamate. The protein operates within cell wall biogenesis; peptidoglycan biosynthesis. In terms of biological role, provides the (R)-glutamate required for cell wall biosynthesis. This Streptococcus pyogenes serotype M2 (strain MGAS10270) protein is Glutamate racemase.